We begin with the raw amino-acid sequence, 457 residues long: Glycine receptor subunit alpha-1 (457 aa).

The signal sequence occupies residues 1–28; sequence MYSFNTLRFYLWETIVFFSLAASKEAEA. Residues 29–250 lie on the Extracellular side of the membrane; the sequence is ARSAPKPMSP…RFHLERQMGY (222 aa). Residue Asn-66 is glycosylated (N-linked (GlcNAc...) asparagine). Glycine contacts are provided by Arg-93 and Ser-157. A disulfide bridge links Cys-166 with Cys-180. 2 residues coordinate Zn(2+): Glu-220 and Asp-222. An intrachain disulfide couples Cys-226 to Cys-237. A strychnine-binding site is contributed by 230-235; sequence YNTGKF. Thr-232 contacts glycine. His-243 is a binding site for Zn(2+). The chain crosses the membrane as a helical span at residues 251 to 272; the sequence is YLIQMYIPSLLIVILSWISFWI. The Cytoplasmic segment spans residues 273–277; the sequence is NMDAA. Residues 278–298 form a helical membrane-spanning segment; that stretch reads PARVGLGITTVLTMTTQSSGS. The Extracellular segment spans residues 299 to 309; it reads RASLPKVSYVK. Residues 310–330 form a helical membrane-spanning segment; the sequence is AIDIWMAVCLLFVFSALLEYA. Residues 331-425 are Cytoplasmic-facing; the sequence is AVNFVSRQHK…FIQRAKKIDK (95 aa). The interval 391 to 410 is disordered; sequence KGANNNNTTNPPPAPSKSPE. The helical transmembrane segment at 426–446 threads the bilayer; it reads ISRIGFPMAFLIFNMFYWIIY. The Extracellular portion of the chain corresponds to 447 to 457; it reads KIVRREDVHNK.

It belongs to the ligand-gated ion channel (TC 1.A.9) family. Glycine receptor (TC 1.A.9.3) subfamily. GLRA1 sub-subfamily. Interacts with GLRB to form heteropentameric channels; this is probably the predominant form in vivo. Heteropentamer composed of four GLRA1 subunits and one GLRB subunit. Heteropentamer composed of two GLRA1 and three GLRB. Heteropentamer composed of three GLRA1 and two GLRB. Homopentamer (in vitro). Both homopentamers and heteropentamers form functional ion channels, but their characteristics are subtly different. As to expression, detected in spinal cord neurons. Detected in brain stem neurons. Detected at lower levels in hippocampus and cerebellum. Detected in the inner plexiform layer of the retina (at protein level).

It is found in the postsynaptic cell membrane. The protein resides in the synapse. Its subcellular location is the perikaryon. The protein localises to the cell projection. It localises to the dendrite. It is found in the cell membrane. The enzyme catalyses chloride(in) = chloride(out). With respect to regulation, channel opening is triggered by extracellular glycine. Channel characteristics depend on the subunit composition; heteropentameric channels are activated by lower glycine levels and display faster desensitization. Channel opening is also triggered by taurine and beta-alanine. Inhibited by strychnine. Strychnine binding locks the channel in a closed conformation and prevents channel opening in response to extracellular glycine. Inhibited by picrotoxin. Channel activity is enhanced by 5 uM Zn(2+) and inhibited by 100 uM Zn(2+). In terms of biological role, subunit of heteromeric glycine-gated chloride channels. Plays an important role in the down-regulation of neuronal excitability. Contributes to the generation of inhibitory postsynaptic currents. Channel activity is potentiated by ethanol. Potentiation of channel activity by intoxicating levels of ethanol contribute to the sedative effects of ethanol. This chain is Glycine receptor subunit alpha-1 (Glra1), found in Mus musculus (Mouse).